The chain runs to 181 residues: Transcription termination/antitermination protein NusG (181 aa).

In terms of domain architecture, KOW spans 130 to 158; it reads PGETVRVNDGPFSDFNGIVEEVDYEKNRL.

Belongs to the NusG family. As to quaternary structure, monomer. Interacts with the transcription termination factor Rho and with RNA polymerase.

In terms of biological role, participates in transcription elongation, termination and antitermination. In the absence of Rho, increases the rate of transcription elongation by the RNA polymerase (RNAP), probably by partially suppressing pausing. In the presence of Rho, modulates most Rho-dependent termination events by interacting with the RNAP to render the complex more susceptible to the termination activity of Rho. May be required to overcome a kinetic limitation of Rho to function at certain terminators. Also involved in ribosomal RNA transcriptional antitermination. The sequence is that of Transcription termination/antitermination protein NusG from Buchnera aphidicola subsp. Baizongia pistaciae (strain Bp).